The following is a 277-amino-acid chain: NH(3)-dependent NAD(+) synthetase (277 aa).

An ATP-binding site is contributed by 47-54 (GISGGQDS). Residue D53 coordinates Mg(2+). R141 is a binding site for deamido-NAD(+). T161 is an ATP binding site. Residue E166 participates in Mg(2+) binding. Residues K174 and D181 each coordinate deamido-NAD(+). ATP-binding residues include K190 and T212. 261–262 (HK) contributes to the deamido-NAD(+) binding site.

It belongs to the NAD synthetase family. Homodimer.

It carries out the reaction deamido-NAD(+) + NH4(+) + ATP = AMP + diphosphate + NAD(+) + H(+). It participates in cofactor biosynthesis; NAD(+) biosynthesis; NAD(+) from deamido-NAD(+) (ammonia route): step 1/1. Catalyzes the ATP-dependent amidation of deamido-NAD to form NAD. Uses ammonia as a nitrogen source. The protein is NH(3)-dependent NAD(+) synthetase of Lactobacillus johnsonii (strain CNCM I-12250 / La1 / NCC 533).